Consider the following 319-residue polypeptide: Taste receptor type 2 member 30 (319 aa).

Methionine 1 is a topological domain (extracellular). The chain crosses the membrane as a helical span at residues 2–22 (ITFLPIIFSILIVVIFVIGNF). Topologically, residues 23–46 (ANGFIALVNSIEWVKRQKISFVDQ) are cytoplasmic. A helical transmembrane segment spans residues 47 to 67 (ILTALAVSRVGLLWVLLLHWY). Residues 68–86 (ATQLNPAFYSVEVRITAYN) are Extracellular-facing. Residues 87 to 107 (VWAVTNHFSSWLATSLSMFYL) form a helical membrane-spanning segment. At 108 to 126 (LRIANFSNLIFLRIKRRVK) the chain is on the cytoplasmic side. A helical membrane pass occupies residues 127-147 (SVVLVILLGPLLFLVCHLFVI). Topologically, residues 148–178 (NMDETVWTKEYEGNVTWKIKLRSAMYHSNMT) are extracellular. 2 N-linked (GlcNAc...) asparagine glycosylation sites follow: asparagine 161 and asparagine 176. A helical membrane pass occupies residues 179 to 199 (LTMLANFVPLTLTLISFLLLI). Residues 200-229 (CSLCKHLKKMQLHGKGSQDPSTKVHIKALQ) lie on the Cytoplasmic side of the membrane. A helical membrane pass occupies residues 230 to 250 (TVTSFLLLCAIYFLSMIISVC). The Extracellular segment spans residues 251 to 259 (NFGRLEKQP). Residues 260-280 (VFMFCQAIIFSYPSTHPFILI) form a helical membrane-spanning segment. The Cytoplasmic segment spans residues 281–319 (LGNKKLKQIFLSVLRHVRYWVKDRSLRLHRFTRGALCVF).

It belongs to the G-protein coupled receptor T2R family. Expressed in subsets of taste receptor cells of the tongue and exclusively in gustducin-positive cells.

It localises to the membrane. Receptor that may play a role in the perception of bitterness and is gustducin-linked. May play a role in sensing the chemical composition of the gastrointestinal content. The activity of this receptor may stimulate alpha gustducin, mediate PLC-beta-2 activation and lead to the gating of TRPM5. The sequence is that of Taste receptor type 2 member 30 (TAS2R30) from Homo sapiens (Human).